Reading from the N-terminus, the 246-residue chain is 3-deoxy-manno-octulosonate cytidylyltransferase (246 aa).

It belongs to the KdsB family.

It is found in the cytoplasm. The enzyme catalyses 3-deoxy-alpha-D-manno-oct-2-ulosonate + CTP = CMP-3-deoxy-beta-D-manno-octulosonate + diphosphate. Its pathway is nucleotide-sugar biosynthesis; CMP-3-deoxy-D-manno-octulosonate biosynthesis; CMP-3-deoxy-D-manno-octulosonate from 3-deoxy-D-manno-octulosonate and CTP: step 1/1. The protein operates within bacterial outer membrane biogenesis; lipopolysaccharide biosynthesis. Functionally, activates KDO (a required 8-carbon sugar) for incorporation into bacterial lipopolysaccharide in Gram-negative bacteria. The chain is 3-deoxy-manno-octulosonate cytidylyltransferase from Bradyrhizobium diazoefficiens (strain JCM 10833 / BCRC 13528 / IAM 13628 / NBRC 14792 / USDA 110).